The chain runs to 150 residues: L-alanine exporter AlaE (150 aa).

The next 4 membrane-spanning stretches (helical) occupy residues 17–37 (FAMVVFCFITGMFIEILISGM), 48–68 (LSIPVNIAIAWPYGVFRDFML), 86–106 (LVAYVTFQSPAYAMILLVVGA), and 111–131 (IITAVSSNVVVSCVMGVFYGY).

It belongs to the AlaE exporter family.

Its subcellular location is the cell inner membrane. Exports L-alanine. The sequence is that of L-alanine exporter AlaE from Aliivibrio fischeri (strain ATCC 700601 / ES114) (Vibrio fischeri).